We begin with the raw amino-acid sequence, 314 residues long: ATP synthase gamma chain (314 aa).

The protein belongs to the ATPase gamma chain family. In terms of assembly, F-type ATPases have 2 components, CF(1) - the catalytic core - and CF(0) - the membrane proton channel. CF(1) has five subunits: alpha(3), beta(3), gamma(1), delta(1), epsilon(1). CF(0) has three main subunits: a, b and c.

The protein localises to the cellular thylakoid membrane. In terms of biological role, produces ATP from ADP in the presence of a proton gradient across the membrane. The gamma chain is believed to be important in regulating ATPase activity and the flow of protons through the CF(0) complex. This Picosynechococcus sp. (strain ATCC 27264 / PCC 7002 / PR-6) (Agmenellum quadruplicatum) protein is ATP synthase gamma chain.